We begin with the raw amino-acid sequence, 639 residues long: Transcription factor phomR (639 aa).

Residues 14 to 41 constitute a DNA-binding region (zn(2)-C6 fungal-type); the sequence is CWTCRLRRKKCNEGGPPCDNCEARGIHC. Disordered stretches follow at residues 58–136 and 476–499; these read REEA…AGTG and LPRS…TGPE. Residues 68–108 are compositionally biased toward low complexity; it reads SGRGRSYSRSSSTAAAAAPKPAEGAMVTGGSSSSSRGSGSS.

It localises to the nucleus. Functionally, transcription factor; part of the gene cluster that mediates the biosynthesis of the phomopsins, a group of hexapeptide mycotoxins which infects lupins and causes lupinosis disease in livestock. May play a role in the regulation of the production of phomopsins. This is Transcription factor phomR from Diaporthe leptostromiformis (Lupinosis disease fungus).